Here is a 213-residue protein sequence, read N- to C-terminus: Probable nicotinate-nucleotide adenylyltransferase (213 aa).

This sequence belongs to the NadD family.

It catalyses the reaction nicotinate beta-D-ribonucleotide + ATP + H(+) = deamido-NAD(+) + diphosphate. It functions in the pathway cofactor biosynthesis; NAD(+) biosynthesis; deamido-NAD(+) from nicotinate D-ribonucleotide: step 1/1. Functionally, catalyzes the reversible adenylation of nicotinate mononucleotide (NaMN) to nicotinic acid adenine dinucleotide (NaAD). The sequence is that of Probable nicotinate-nucleotide adenylyltransferase from Citrobacter koseri (strain ATCC BAA-895 / CDC 4225-83 / SGSC4696).